A 44-amino-acid polypeptide reads, in one-letter code: Photosystem I reaction center subunit IX (44 aa).

The chain crosses the membrane as a helical span at residues Tyr-7–Ile-27.

It belongs to the PsaJ family.

The protein resides in the plastid. Its subcellular location is the chloroplast thylakoid membrane. May help in the organization of the PsaE and PsaF subunits. The sequence is that of Photosystem I reaction center subunit IX from Eucalyptus globulus subsp. globulus (Tasmanian blue gum).